Consider the following 745-residue polypeptide: Mitogen-activated protein kinase kinase kinase zak-1 (745 aa).

The Protein kinase domain maps to 31–305; the sequence is IQVGDHIGVG…KVMDECEKFM (275 aa). ATP is bound by residues 37–45 and Lys63; that span reads IGVGTFGAV. Catalysis depends on Asp159, which acts as the Proton acceptor. A coiled-coil region spans residues 307–352; that stretch reads LEDWKTEIEKQEKNVEKMRKDLEKRREQLEIREKALKQRMKVEQAV. An SAM domain is found at 366–438; the sequence is WSEHHTSHWV…MKMIRKLADT (73 aa). The segment at 693-745 is disordered; it reads LTRRRRTTTTNSEDTEKSDTNNKTPESQARRVHVHGGKDKWNWKKGKSRPKFT. Over residues 735 to 745 the composition is skewed to basic residues; that stretch reads WKKGKSRPKFT.

Belongs to the protein kinase superfamily. STE Ser/Thr protein kinase family. MAP kinase kinase kinase subfamily. It depends on Mg(2+) as a cofactor. In terms of tissue distribution, widely expressed; expressed in most tissues, including intestines, muscle and the nervous system.

Its subcellular location is the cytoplasm. The protein resides in the nucleus. The enzyme catalyses L-seryl-[protein] + ATP = O-phospho-L-seryl-[protein] + ADP + H(+). It catalyses the reaction L-threonyl-[protein] + ATP = O-phospho-L-threonyl-[protein] + ADP + H(+). Functionally, stress-activated component of a protein kinase signal transduction cascade that promotes programmed cell death in response to ribotoxic stress. Acts as the proximal sensor of ribotoxic stress: directly binds to the ribosome, thereby acting as a sentinel for colliding ribosomes. Upon ribosome collisions, activates the stress-activated protein kinase signal transduction cascade, leading to programmed cell death. Acts by catalyzing phosphorylation of MAP kinase kinases, leading to activation of the JNK and MAP kinase p38 pathways. The chain is Mitogen-activated protein kinase kinase kinase zak-1 from Caenorhabditis elegans.